Here is a 566-residue protein sequence, read N- to C-terminus: Hemocyanin B chain (566 aa).

The cysteines at positions 82 and 87 are disulfide-linked. Residues His-183, His-187, His-213, His-309, His-313, and His-347 each contribute to the Cu cation site.

The protein belongs to the tyrosinase family. Hemocyanin subfamily. As to expression, hemolymph.

The protein localises to the secreted. The protein resides in the extracellular space. Functionally, hemocyanins are copper-containing oxygen carriers occurring freely dissolved in the hemolymph of many mollusks and arthropods. This chain is Hemocyanin B chain, found in Astacus leptodactylus (Turkish narrow-clawed crayfish).